Reading from the N-terminus, the 1163-residue chain is DNA-directed RNA polymerase subunit beta' (1163 aa).

Zn(2+)-binding residues include Cys-59, Cys-61, Cys-74, and Cys-77. 3 residues coordinate Mg(2+): Asp-449, Asp-451, and Asp-453. Positions 794, 868, 875, and 878 each coordinate Zn(2+).

It belongs to the RNA polymerase beta' chain family. The RNAP catalytic core consists of 2 alpha, 1 beta, 1 beta' and 1 omega subunit. When a sigma factor is associated with the core the holoenzyme is formed, which can initiate transcription. Mg(2+) serves as cofactor. Requires Zn(2+) as cofactor.

The catalysed reaction is RNA(n) + a ribonucleoside 5'-triphosphate = RNA(n+1) + diphosphate. Functionally, DNA-dependent RNA polymerase catalyzes the transcription of DNA into RNA using the four ribonucleoside triphosphates as substrates. The chain is DNA-directed RNA polymerase subunit beta' from Caldicellulosiruptor saccharolyticus (strain ATCC 43494 / DSM 8903 / Tp8T 6331).